The chain runs to 413 residues: Glucose-1-phosphate adenylyltransferase (413 aa).

Residues glycine 161, 176–177 (EK), and serine 195 contribute to the alpha-D-glucose 1-phosphate site.

Belongs to the bacterial/plant glucose-1-phosphate adenylyltransferase family. As to quaternary structure, homotetramer.

The catalysed reaction is alpha-D-glucose 1-phosphate + ATP + H(+) = ADP-alpha-D-glucose + diphosphate. It functions in the pathway glycan biosynthesis; glycogen biosynthesis. Its function is as follows. Involved in the biosynthesis of ADP-glucose, a building block required for the elongation reactions to produce glycogen. Catalyzes the reaction between ATP and alpha-D-glucose 1-phosphate (G1P) to produce pyrophosphate and ADP-Glc. The polypeptide is Glucose-1-phosphate adenylyltransferase (Anaeromyxobacter dehalogenans (strain 2CP-C)).